The sequence spans 1380 residues: Tripeptidyl-peptidase 2 (1380 aa).

The 510-residue stretch at 110–619 (STFIASLMPK…QGLMQVDKAY (510 aa)) folds into the Peptidase S8 domain. Residues Asp-145, His-372, and Ser-558 each act as charge relay system in the active site. The disordered stretch occupies residues 1099 to 1143 (DEKEGKNPKDNPVSYPISYVVPPNKPEEDKKAASAPTCSKSVSER). The span at 1110 to 1120 (PVSYPISYVVP) shows a compositional bias: low complexity. Coiled-coil stretches lie at residues 1152–1181 (KIKF…KSEY) and 1238–1300 (EDDE…ELTK).

The protein belongs to the peptidase S8 family. Assembles into a large oligomeric complex containing two related proteins 153 and 142 kDa that are derived from the single TPP2 gene. The 142 kDa form mainly differs from the 153 kDa form by a truncation at the C-terminal end.

It carries out the reaction Release of an N-terminal tripeptide from a polypeptide.. Inhibited by alanine-alanine-phenylalanine-chloromethylketone, butabindide and phenylmethanesulfonyl fluoride (PMSF), but not by leupeptin, N-ethylmaleimide, EDTA, MG132 and lactacystin. In terms of biological role, serine protease of the proteasome pathway that may function with the 20S proteasome to degrade oxidized proteins generated by environmental stress. This Arabidopsis thaliana (Mouse-ear cress) protein is Tripeptidyl-peptidase 2 (TPP2).